Consider the following 266-residue polypeptide: Apolipoprotein A-I (266 aa).

Residues 1–18 (MKAALLTLAVLFLTGSQA) form the signal peptide. 2 repeat units span residues 67-88 (LKLL…EQIG) and 89-110 (PVTQ…QEMS). The tract at residues 67 to 266 (LKLLDNWDSL…DEATKKLNAQ (200 aa)) is 10 X approximate tandem repeats. M109 is subject to Methionine sulfoxide. A 3; half-length repeat occupies 111 to 121 (KDLEEVKQKVQ). Tandem repeats lie at residues 122–143 (PYLD…QKVA), 144–165 (PLGS…EKLS), 166–187 (PLAE…AQLA), 188–209 (PYSD…EGGG), and 210–231 (ASLA…EKAR). The stretch at 232 to 242 (PALEDLRQGLL) is one 9; half-length repeat. Repeat unit 10 spans residues 243–266 (PVLESFKVSLLAAIDEATKKLNAQ).

It belongs to the apolipoprotein A1/A4/E family. As to quaternary structure, homodimer. Interacts with APOA1BP and CLU. Component of a sperm activating protein complex (SPAP), consisting of APOA1, an immunoglobulin heavy chain, an immunoglobulin light chain and albumin. Interacts with NDRG1. Interacts with SCGB3A2. Interacts with NAXE and YJEFN3. Palmitoylated. Post-translationally, glycosylated. In terms of processing, phosphorylation sites are present in the extracellular medium. Major protein of plasma HDL, also found in chylomicrons. Synthesized in the liver and small intestine.

It is found in the secreted. Its function is as follows. Participates in the reverse transport of cholesterol from tissues to the liver for excretion by promoting cholesterol efflux from tissues and by acting as a cofactor for the lecithin cholesterol acyltransferase (LCAT). As part of the SPAP complex, activates spermatozoa motility. This Canis lupus familiaris (Dog) protein is Apolipoprotein A-I (APOA1).